The chain runs to 59 residues: Large ribosomal subunit protein uL30 (59 aa).

The protein belongs to the universal ribosomal protein uL30 family. As to quaternary structure, part of the 50S ribosomal subunit.

The sequence is that of Large ribosomal subunit protein uL30 from Geotalea daltonii (strain DSM 22248 / JCM 15807 / FRC-32) (Geobacter daltonii).